Here is a 301-residue protein sequence, read N- to C-terminus: Small ribosomal subunit protein uS3 (301 aa).

A KH type-2 domain is found at 39-107; sequence VREYLKAKLK…PVAVNIEEVR (69 aa). Residues 211 to 301 are disordered; sequence GESPGAKLDA…AAAADGTKTE (91 aa). Positions 224–244 are enriched in basic and acidic residues; sequence DEERKPRGPRRDARPGSDRPA. Residues 245–257 show a composition bias toward low complexity; sequence PRGARAPRAPAGG.

Belongs to the universal ribosomal protein uS3 family. As to quaternary structure, part of the 30S ribosomal subunit. Forms a tight complex with proteins S10 and S14.

Binds the lower part of the 30S subunit head. Binds mRNA in the 70S ribosome, positioning it for translation. This chain is Small ribosomal subunit protein uS3, found in Polaromonas sp. (strain JS666 / ATCC BAA-500).